We begin with the raw amino-acid sequence, 102 residues long: Urease subunit beta (102 aa).

It belongs to the urease beta subunit family. In terms of assembly, heterotrimer of UreA (gamma), UreB (beta) and UreC (alpha) subunits. Three heterotrimers associate to form the active enzyme.

The protein localises to the cytoplasm. The enzyme catalyses urea + 2 H2O + H(+) = hydrogencarbonate + 2 NH4(+). Its pathway is nitrogen metabolism; urea degradation; CO(2) and NH(3) from urea (urease route): step 1/1. This Pseudomonas savastanoi pv. phaseolicola (strain 1448A / Race 6) (Pseudomonas syringae pv. phaseolicola (strain 1448A / Race 6)) protein is Urease subunit beta.